Reading from the N-terminus, the 267-residue chain is tRNA pseudouridine synthase A (267 aa).

Asp-55 acts as the Nucleophile in catalysis. A substrate-binding site is contributed by Tyr-111.

Belongs to the tRNA pseudouridine synthase TruA family.

It catalyses the reaction uridine(38/39/40) in tRNA = pseudouridine(38/39/40) in tRNA. Its function is as follows. Formation of pseudouridine at positions 38, 39 and 40 in the anticodon stem and loop of transfer RNAs. The chain is tRNA pseudouridine synthase A from Thermococcus gammatolerans (strain DSM 15229 / JCM 11827 / EJ3).